A 56-amino-acid polypeptide reads, in one-letter code: Large ribosomal subunit protein bL32 (56 aa).

The interval 1-26 (MAVQQNKKSRSKRGMRRSHDALSTAQ) is disordered. The segment covering 7–16 (KKSRSKRGMR) has biased composition (basic residues).

It belongs to the bacterial ribosomal protein bL32 family.

This is Large ribosomal subunit protein bL32 from Shewanella baltica (strain OS155 / ATCC BAA-1091).